We begin with the raw amino-acid sequence, 173 residues long: Chorion protein S19 (173 aa).

An N-terminal signal peptide occupies residues 1-21 (MNKFATLAVIFCACIVGSCYA).

The protein belongs to the chorion protein S19 family.

The protein localises to the secreted. In terms of biological role, chorion membrane (egg shell) protein; plays a role in protecting the egg from the environment. The protein is Chorion protein S19 (Cp19) of Drosophila melanogaster (Fruit fly).